Here is a 270-residue protein sequence, read N- to C-terminus: NAD(P)H-hydrate epimerase (270 aa).

The YjeF N-terminal domain maps to 25-234 (FQQLMDLMQN…DLLAPEEIYQ (210 aa)). 73 to 77 (DNGGQ) contacts (6S)-NADPHX. Residues asparagine 74 and aspartate 144 each coordinate K(+). (6S)-NADPHX contacts are provided by residues 148 to 154 (GVGLYGH) and glutamate 177. Threonine 180 lines the K(+) pocket.

The protein belongs to the NnrE/AIBP family. Requires K(+) as cofactor.

The catalysed reaction is (6R)-NADHX = (6S)-NADHX. It catalyses the reaction (6R)-NADPHX = (6S)-NADPHX. Catalyzes the epimerization of the S- and R-forms of NAD(P)HX, a damaged form of NAD(P)H that is a result of enzymatic or heat-dependent hydration. This is a prerequisite for the S-specific NAD(P)H-hydrate dehydratase to allow the repair of both epimers of NAD(P)HX. The polypeptide is NAD(P)H-hydrate epimerase (Legionella pneumophila (strain Paris)).